We begin with the raw amino-acid sequence, 371 residues long: Histidinol-phosphate aminotransferase (371 aa).

Position 227 is an N6-(pyridoxal phosphate)lysine (Lys-227).

This sequence belongs to the class-II pyridoxal-phosphate-dependent aminotransferase family. Histidinol-phosphate aminotransferase subfamily. As to quaternary structure, homodimer. Requires pyridoxal 5'-phosphate as cofactor.

The catalysed reaction is L-histidinol phosphate + 2-oxoglutarate = 3-(imidazol-4-yl)-2-oxopropyl phosphate + L-glutamate. It participates in amino-acid biosynthesis; L-histidine biosynthesis; L-histidine from 5-phospho-alpha-D-ribose 1-diphosphate: step 7/9. This is Histidinol-phosphate aminotransferase from Sphingopyxis alaskensis (strain DSM 13593 / LMG 18877 / RB2256) (Sphingomonas alaskensis).